Consider the following 133-residue polypeptide: ATP synthase epsilon chain (133 aa).

This sequence belongs to the ATPase epsilon chain family. As to quaternary structure, F-type ATPases have 2 components, CF(1) - the catalytic core - and CF(0) - the membrane proton channel. CF(1) has five subunits: alpha(3), beta(3), gamma(1), delta(1), epsilon(1). CF(0) has three main subunits: a, b and c.

It localises to the cellular thylakoid membrane. In terms of biological role, produces ATP from ADP in the presence of a proton gradient across the membrane. This chain is ATP synthase epsilon chain, found in Prochlorococcus marinus (strain MIT 9303).